The following is an 86-amino-acid chain: Anti-adapter protein IraP (86 aa).

The stretch at 1 to 36 (MKNLIAELLVKLAEKEEESKELVAQVEALEIVVTAL) forms a coiled coil.

The protein belongs to the IraP family. In terms of assembly, interacts with RssB.

The protein resides in the cytoplasm. Functionally, inhibits RpoS proteolysis by regulating RssB activity, thereby increasing the stability of the sigma stress factor RpoS especially during phosphate starvation, but also in stationary phase and during nitrogen starvation. Its effect on RpoS stability is due to its interaction with RssB, which probably blocks the interaction of RssB with RpoS, and the consequent delivery of the RssB-RpoS complex to the ClpXP protein degradation pathway. The sequence is that of Anti-adapter protein IraP from Cronobacter sakazakii (strain ATCC BAA-894) (Enterobacter sakazakii).